The following is a 301-amino-acid chain: UDP-N-acetylenolpyruvoylglucosamine reductase 1 (301 aa).

An FAD-binding PCMH-type domain is found at 29 to 196 (KIGGPADILI…LEAEFQLQIG (168 aa)). The active site involves arginine 174. The active-site Proton donor is the serine 225. Glutamate 295 is an active-site residue.

The protein belongs to the MurB family. Requires FAD as cofactor.

Its subcellular location is the cytoplasm. It carries out the reaction UDP-N-acetyl-alpha-D-muramate + NADP(+) = UDP-N-acetyl-3-O-(1-carboxyvinyl)-alpha-D-glucosamine + NADPH + H(+). Its pathway is cell wall biogenesis; peptidoglycan biosynthesis. In terms of biological role, cell wall formation. The sequence is that of UDP-N-acetylenolpyruvoylglucosamine reductase 1 from Bacillus thuringiensis subsp. konkukian (strain 97-27).